We begin with the raw amino-acid sequence, 256 residues long: uncharacterized protein (256 aa).

Residues 201 to 214 (ACKEGVDSSCKEEG) show a composition bias toward basic and acidic residues. Residues 201–231 (ACKEGVDSSCKEEGGGCEEEGSGSEEDSDDS) form a disordered region. The span at 215–231 (GGCEEEGSGSEEDSDDS) shows a compositional bias: acidic residues.

The protein localises to the mitochondrion. This is an uncharacterized protein from Zea mays (Maize).